Reading from the N-terminus, the 289-residue chain is Acetyl-coenzyme A carboxylase carboxyl transferase subunit beta (289 aa).

Residues 28-289 enclose the CoA carboxyltransferase N-terminal domain; the sequence is VMTKCPKCKK…QGGEMAVWQS (262 aa). Cys-32, Cys-35, Cys-51, and Cys-54 together coordinate Zn(2+). Residues 32 to 54 form a C4-type zinc finger; the sequence is CPKCKKIMYTKEVLKNLKVCVNC.

Belongs to the AccD/PCCB family. In terms of assembly, acetyl-CoA carboxylase is a heterohexamer composed of biotin carboxyl carrier protein (AccB), biotin carboxylase (AccC) and two subunits each of ACCase subunit alpha (AccA) and ACCase subunit beta (AccD). Requires Zn(2+) as cofactor.

The protein resides in the cytoplasm. The catalysed reaction is N(6)-carboxybiotinyl-L-lysyl-[protein] + acetyl-CoA = N(6)-biotinyl-L-lysyl-[protein] + malonyl-CoA. The protein operates within lipid metabolism; malonyl-CoA biosynthesis; malonyl-CoA from acetyl-CoA: step 1/1. Functionally, component of the acetyl coenzyme A carboxylase (ACC) complex. Biotin carboxylase (BC) catalyzes the carboxylation of biotin on its carrier protein (BCCP) and then the CO(2) group is transferred by the transcarboxylase to acetyl-CoA to form malonyl-CoA. The polypeptide is Acetyl-coenzyme A carboxylase carboxyl transferase subunit beta (Bacillus cereus (strain ZK / E33L)).